The sequence spans 415 residues: Probable G-protein coupled receptor 19 (415 aa).

The Extracellular segment spans residues 1–69 (MVFAHRMDND…LNPGEVATAS (69 aa)). N25 and N52 each carry an N-linked (GlcNAc...) asparagine glycan. A helical transmembrane segment spans residues 70–90 (IFFGALWLFSIFGNSLVCLVI). Topologically, residues 91-102 (HRSRRTQSTTNY) are cytoplasmic. Residues 103–123 (FVVSMACADLLISVASTPFVV) form a helical membrane-spanning segment. Residues 124-152 (LQFTTGRWTLGSAMCKVVRYFQYLTPGVQ) are Extracellular-facing. The cysteines at positions 138 and 210 are disulfide-linked. The chain crosses the membrane as a helical span at residues 153 to 173 (IYVLLSICIDRFYTIVYPLSF). At 174-182 (KVSREKAKK) the chain is on the cytoplasmic side. The chain crosses the membrane as a helical span at residues 183-203 (MIAASWILDAAFVTPVFFFYG). Residues 204–221 (SNWDSHCNYFLPPSWEGT) are Extracellular-facing. Residues 222–242 (AYTVIHFLVGFVIPSILIILF) traverse the membrane as a helical segment. Over 243-277 (YQKVIKYIWRIGTDGRTLRRTMNIVPRTKVKTVKM) the chain is Cytoplasmic. The helical transmembrane segment at 278–298 (FLLLNLVFLFSWLPFHVAQLW) threads the bilayer. The Extracellular portion of the chain corresponds to 299 to 309 (HPHEQDYKKSS). Residues 310 to 332 (LVFTAVTWVSFSSSASKPTLYSI) form a helical membrane-spanning segment. Topologically, residues 333–415 (YNANFRRGMK…INSNPPNTFV (83 aa)) are cytoplasmic.

This sequence belongs to the G-protein coupled receptor 1 family. In terms of tissue distribution, strongly expressed in the brain.

Its subcellular location is the cell membrane. In terms of biological role, G-protein coupled receptor that plays a role in the regulation of circadian rhythms and energy metabolism. Participates in maintaining proper circadian gene expression in the suprachiasmatic nucleus (SCN), the locus of the master circadian clock in the brain. May function as a coordinator of aging-associated metabolic dysfunction, stress response, DNA integrity management, and eventual senescence. Upon binding to adropin, modulates mitochondrial energy metabolism via the p44/42-PDK4 signaling pathway, influencing pyruvate dehydrogenase activity. In Mus musculus (Mouse), this protein is Probable G-protein coupled receptor 19 (Gpr19).